Consider the following 454-residue polypeptide: Dihydrolipoyllysine-residue succinyltransferase component of 2-oxoglutarate dehydrogenase complex, mitochondrial (454 aa).

The transit peptide at 1–68 (MLSRSRCVSR…RFFQTTAVCK (68 aa)) directs the protein to the mitochondrion. A Lipoyl-binding domain is found at 71–145 (VITVQTPAFA…EGGTPLFTLR (75 aa)). The residue at position 82 (serine 82) is a Phosphoserine. Lysine 111 is subject to N6-lipoyllysine. The interval 147–227 (TGAAPAKAKP…KGLRSEHREK (81 aa)) is disordered. Residues 149–163 (AAPAKAKPAETPAPA) are compositionally biased toward low complexity. N6-acetyllysine is present on lysine 155. A compositionally biased stretch (pro residues) spans 186–197 (PPVPSPSQPPSS). The segment covering 198 to 217 (KPVSAIKPTAAPPLAEAGAA) has biased composition (low complexity). 5 positions are modified to N6-acetyllysine: lysine 268, lysine 273, lysine 274, lysine 278, and lysine 308. Active-site residues include histidine 425 and aspartate 429.

Belongs to the 2-oxoacid dehydrogenase family. The 2-oxoglutarate dehydrogenase complex is composed of OGDH (2-oxoglutarate dehydrogenase; E1), DLST (dihydrolipoamide succinyltransferase; E2), DLD (dihydrolipoamide dehydrogenase; E3) and the assembly factor KGD4. It contains multiple copies of the three enzymatic components (E1, E2 and E3). In the nucleus, the 2-oxoglutarate dehydrogenase complex associates with KAT2A. Interacts with ABHD11; this interaction maintains the functional lipoylation of the 2-oxoglutarate dehydrogenase complex. (R)-lipoate serves as cofactor.

The protein resides in the mitochondrion matrix. It is found in the nucleus. It carries out the reaction N(6)-[(R)-dihydrolipoyl]-L-lysyl-[protein] + succinyl-CoA = N(6)-[(R)-S(8)-succinyldihydrolipoyl]-L-lysyl-[protein] + CoA. It participates in amino-acid degradation; L-lysine degradation via saccharopine pathway; glutaryl-CoA from L-lysine: step 6/6. Its pathway is carbohydrate metabolism; tricarboxylic acid cycle. Dihydrolipoamide succinyltransferase (E2) component of the 2-oxoglutarate dehydrogenase complex. The 2-oxoglutarate dehydrogenase complex catalyzes the overall conversion of 2-oxoglutarate to succinyl-CoA and CO(2). The 2-oxoglutarate dehydrogenase complex is mainly active in the mitochondrion. A fraction of the 2-oxoglutarate dehydrogenase complex also localizes in the nucleus and is required for lysine succinylation of histones: associates with KAT2A on chromatin and provides succinyl-CoA to histone succinyltransferase KAT2A. The sequence is that of Dihydrolipoyllysine-residue succinyltransferase component of 2-oxoglutarate dehydrogenase complex, mitochondrial from Mus musculus (Mouse).